Reading from the N-terminus, the 307-residue chain is Transcription factor MYB78 (307 aa).

HTH myb-type domains follow at residues 23–79 (EMDV…RPDV) and 80–130 (RRGN…QKHA). DNA-binding regions (H-T-H motif) lie at residues 51-75 (WNSLARCAELKRTGKSCRLRWLNYL) and 103-126 (WSKIAQYLPGRTDNEIKNYWRTRV).

The protein localises to the nucleus. This chain is Transcription factor MYB78, found in Arabidopsis thaliana (Mouse-ear cress).